Consider the following 22-residue polypeptide: Mu-conotoxin TIIIA (22 aa).

3 disulfides stabilise this stretch: cysteine 4-cysteine 16, cysteine 5-cysteine 21, and cysteine 11-cysteine 22. 4-hydroxyproline is present on residues proline 8 and proline 18. Residue cysteine 22 is modified to Cysteine amide.

The protein belongs to the conotoxin M superfamily. Expressed by the venom duct.

The protein resides in the secreted. Its function is as follows. Mu-conotoxins block voltage-gated sodium channels (Nav). This synthetic toxin reversibly and potently blocks rNav1.4/SCN4A (IC(50) is 9 nM) and rNav1.2/SCN2A (IC(50) is 40 nM). It also moderately blocks rNav1.1/SCN1A, rNav1.3/SCN3A, and rNav1.6/SCN8A. The block of SCN1A and SCN2A is modified when beta-subunits are coexpressed with alpha subunits. Hence, blocks of channels containing beta-1 and beta-3 subunits are more potent (compared to channels without beta subunits), whereas blocks of channels containing beta-2 and beta-4 subunits are less potent (compared to channels without beta subunits). The chain is Mu-conotoxin TIIIA from Conus tulipa (Fish-hunting cone snail).